The primary structure comprises 199 residues: Chaperone protein TorD (199 aa).

Belongs to the TorD/DmsD family. TorD subfamily.

The protein resides in the cytoplasm. In terms of biological role, involved in the biogenesis of TorA. Acts on TorA before the insertion of the molybdenum cofactor and, as a result, probably favors a conformation of the apoenzyme that is competent for acquiring the cofactor. The protein is Chaperone protein TorD of Actinobacillus pleuropneumoniae serotype 7 (strain AP76).